Here is a 205-residue protein sequence, read N- to C-terminus: N-(5'-phosphoribosyl)anthranilate isomerase (205 aa).

The protein belongs to the TrpF family.

It catalyses the reaction N-(5-phospho-beta-D-ribosyl)anthranilate = 1-(2-carboxyphenylamino)-1-deoxy-D-ribulose 5-phosphate. It participates in amino-acid biosynthesis; L-tryptophan biosynthesis; L-tryptophan from chorismate: step 3/5. The sequence is that of N-(5'-phosphoribosyl)anthranilate isomerase from Acidiphilium cryptum (strain JF-5).